Consider the following 45-residue polypeptide: uncharacterized protein (45 aa).

This is an uncharacterized protein from Lolium latent virus (isolate Lolium/USA/US1/-) (LoLV).